The following is a 716-amino-acid chain: Dynein axonemal intermediate chain 7 (716 aa).

It belongs to the DNAI7 family. In terms of assembly, part of the multisubunit axonemal dynein complex formed at least of two heavy chains and a number of intermediate and light chains. Interacts with tubulin. Associates with microtubule. Ubiquitinated. Ubiquitination leads to its degradation through the 26S proteasome. Ubiquitin-proteasome-mediated DNAI7 degradation occurs in mitosis.

The protein resides in the cell projection. The protein localises to the cilium. It is found in the cytoplasm. Via its association with the multisubunit axonemal dynein complex, is potentially involved in the regulation of cilia function. May also act as a cell cycle regulator. The sequence is that of Dynein axonemal intermediate chain 7 from Homo sapiens (Human).